We begin with the raw amino-acid sequence, 555 residues long: Formate--tetrahydrofolate ligase (555 aa).

Thr-65–Thr-72 contacts ATP.

Belongs to the formate--tetrahydrofolate ligase family.

The catalysed reaction is (6S)-5,6,7,8-tetrahydrofolate + formate + ATP = (6R)-10-formyltetrahydrofolate + ADP + phosphate. Its pathway is one-carbon metabolism; tetrahydrofolate interconversion. This Paracoccus denitrificans (strain Pd 1222) protein is Formate--tetrahydrofolate ligase.